Reading from the N-terminus, the 159-residue chain is Deoxyuridine 5'-triphosphate nucleotidohydrolase (159 aa).

Residues serine 79, glycine 92, aspartate 95, tyrosine 98, lysine 103, arginine 148, phenylalanine 153, and glycine 154 each coordinate dUMP.

This sequence belongs to the dUTPase family. As to quaternary structure, homotrimer. Mg(2+) serves as cofactor.

It carries out the reaction dUTP + H2O = dUMP + diphosphate + H(+). It functions in the pathway pyrimidine metabolism; dUMP biosynthesis; dUMP from dCTP (dUTP route): step 2/2. In terms of biological role, involved in nucleotide metabolism via production of dUMP, the immediate precursor of thymidine nucleotides, and decreases the intracellular concentration of dUTP so that uracil cannot be incorporated into DNA. The chain is Deoxyuridine 5'-triphosphate nucleotidohydrolase (DUT1) from Candida albicans (strain SC5314 / ATCC MYA-2876) (Yeast).